The primary structure comprises 159 residues: MAKQKKHPSGTIAQNKKALHDYFIEQRFEAGVALAGWEVKSLRAGKAQLVDSYVLLKDGEAWLLGSHITPLTTASTHVIADPVRTRKLLLHKRELGKLFGAVQQKGYACVALSMYWKKHLVKCEIALAKGKKDFDKRHTEKERDSDREIQRAMRHGKDD.

A disordered region spans residues 132–159 (KDFDKRHTEKERDSDREIQRAMRHGKDD).

It belongs to the SmpB family.

The protein resides in the cytoplasm. Its function is as follows. Required for rescue of stalled ribosomes mediated by trans-translation. Binds to transfer-messenger RNA (tmRNA), required for stable association of tmRNA with ribosomes. tmRNA and SmpB together mimic tRNA shape, replacing the anticodon stem-loop with SmpB. tmRNA is encoded by the ssrA gene; the 2 termini fold to resemble tRNA(Ala) and it encodes a 'tag peptide', a short internal open reading frame. During trans-translation Ala-aminoacylated tmRNA acts like a tRNA, entering the A-site of stalled ribosomes, displacing the stalled mRNA. The ribosome then switches to translate the ORF on the tmRNA; the nascent peptide is terminated with the 'tag peptide' encoded by the tmRNA and targeted for degradation. The ribosome is freed to recommence translation, which seems to be the essential function of trans-translation. In Pseudomonas aeruginosa (strain LESB58), this protein is SsrA-binding protein.